Here is a 473-residue protein sequence, read N- to C-terminus: Tyrosine phenol-lyase (473 aa).

Residue K257 is modified to N6-(pyridoxal phosphate)lysine.

Belongs to the beta-eliminating lyase family. Homotetramer. The cofactor is pyridoxal 5'-phosphate.

The enzyme catalyses L-tyrosine + H2O = phenol + pyruvate + NH4(+). This Intrasporangium calvum (strain ATCC 23552 / DSM 43043 / JCM 3097 / NBRC 12989 / NCIMB 10167 / NRRL B-3866 / 7 KIP) protein is Tyrosine phenol-lyase.